The chain runs to 576 residues: Urease subunit alpha (576 aa).

The Urease domain occupies 132–576; that stretch reads GGVDTHIHFI…LPMAQRYFLF (445 aa). Positions 137, 139, and 220 each coordinate Ni(2+). At Lys220 the chain carries N6-carboxylysine. His222 serves as a coordination point for substrate. Ni(2+) contacts are provided by His249 and His275. The Proton donor role is filled by His323. Asp363 lines the Ni(2+) pocket.

Belongs to the metallo-dependent hydrolases superfamily. Urease alpha subunit family. Heterotrimer of UreA (gamma), UreB (beta) and UreC (alpha) subunits. Three heterotrimers associate to form the active enzyme. Ni cation serves as cofactor. Carboxylation allows a single lysine to coordinate two nickel ions.

It is found in the cytoplasm. The catalysed reaction is urea + 2 H2O + H(+) = hydrogencarbonate + 2 NH4(+). It participates in nitrogen metabolism; urea degradation; CO(2) and NH(3) from urea (urease route): step 1/1. This Arthrobacter sp. (strain FB24) protein is Urease subunit alpha.